A 285-amino-acid chain; its full sequence is 4-hydroxybenzoate octaprenyltransferase (285 aa).

7 helical membrane-spanning segments follow: residues I20–A37, F96–I116, W138–I158, A166–V186, I211–G231, W234–L254, and A262–L282.

It belongs to the UbiA prenyltransferase family. Mg(2+) is required as a cofactor.

The protein resides in the cell inner membrane. It catalyses the reaction all-trans-octaprenyl diphosphate + 4-hydroxybenzoate = 4-hydroxy-3-(all-trans-octaprenyl)benzoate + diphosphate. The protein operates within cofactor biosynthesis; ubiquinone biosynthesis. Functionally, catalyzes the prenylation of para-hydroxybenzoate (PHB) with an all-trans polyprenyl group. Mediates the second step in the final reaction sequence of ubiquinone-8 (UQ-8) biosynthesis, which is the condensation of the polyisoprenoid side chain with PHB, generating the first membrane-bound Q intermediate 3-octaprenyl-4-hydroxybenzoate. The sequence is that of 4-hydroxybenzoate octaprenyltransferase from Hydrogenovibrio crunogenus (strain DSM 25203 / XCL-2) (Thiomicrospira crunogena).